The sequence spans 340 residues: Guanine nucleotide-binding protein G(I)/G(S)/G(T) subunit beta-1 (340 aa).

An N-acetylserine modification is found at serine 2. Serine 2 carries the phosphoserine modification. 7 WD repeats span residues 46–94 (RTRR…HAIP), 95–140 (LRSS…RELA), 141–181 (GHTG…TTFT), 182–223 (GHTG…QTFT), 224–267 (GHES…YSHD), 268–309 (NIIC…GVLA), and 310–340 (GHDNRVSCLGVTDDGMAVATGSWDSFLKIWN). Position 266 is a phosphohistidine (histidine 266).

Belongs to the WD repeat G protein beta family. In terms of assembly, g proteins are composed of 3 units, alpha, beta and gamma. The heterodimer formed by GNB1 and GNG2 interacts with ARHGEF5. The heterodimer formed by GNB1 and GNG2 interacts with GRK2. Forms a complex with GNAO1 and GNG3. Interacts with ARHGEF18 and RASD2. Forms complexes with TAS2R14 and G-proteins; these complexes play a role in the perception of bitterness. Component of the TAS2R14-GNAI1 complex, consisting of TAS2R14, GNAI1, GNB1 and GNG2. Component of the TAS2R14-GNAT3 complex, consisting of TAS2R14, GNAT3, GNB1 and GNG2. Component of the TAS2R14-GNAS2 complex, consisting of TAS2R14, GNAS2, GNB1 and GNG2. Post-translationally, phosphorylation at His-266 by NDKB contributes to G protein activation by increasing the high energetic phosphate transfer onto GDP.

In terms of biological role, guanine nucleotide-binding proteins (G proteins) are involved as a modulator or transducer in various transmembrane signaling systems. The beta and gamma chains are required for the GTPase activity, for replacement of GDP by GTP, and for G protein-effector interaction. The protein is Guanine nucleotide-binding protein G(I)/G(S)/G(T) subunit beta-1 (GNB1) of Bos taurus (Bovine).